The sequence spans 366 residues: Chorismate synthase (366 aa).

Residues Arg-48 and Arg-54 each contribute to the NADP(+) site. Residues 125-127 (RSS), 238-239 (NA), Gly-278, 293-297 (KPTSS), and Arg-319 each bind FMN.

It belongs to the chorismate synthase family. Homotetramer. FMNH2 is required as a cofactor.

The enzyme catalyses 5-O-(1-carboxyvinyl)-3-phosphoshikimate = chorismate + phosphate. It participates in metabolic intermediate biosynthesis; chorismate biosynthesis; chorismate from D-erythrose 4-phosphate and phosphoenolpyruvate: step 7/7. Functionally, catalyzes the anti-1,4-elimination of the C-3 phosphate and the C-6 proR hydrogen from 5-enolpyruvylshikimate-3-phosphate (EPSP) to yield chorismate, which is the branch point compound that serves as the starting substrate for the three terminal pathways of aromatic amino acid biosynthesis. This reaction introduces a second double bond into the aromatic ring system. This chain is Chorismate synthase, found in Ralstonia pickettii (strain 12J).